The following is a 445-amino-acid chain: Hydroxymethylglutaryl-CoA synthase (445 aa).

(3S)-3-hydroxy-3-methylglutaryl-CoA is bound at residue D31. E83 functions as the Proton donor/acceptor in the catalytic mechanism. Residues C120, T163, S211, H244, K253, N328, and S364 each coordinate (3S)-3-hydroxy-3-methylglutaryl-CoA. Catalysis depends on C120, which acts as the Acyl-thioester intermediate. Catalysis depends on H244, which acts as the Proton donor/acceptor.

This sequence belongs to the thiolase-like superfamily. HMG-CoA synthase family.

The catalysed reaction is acetoacetyl-CoA + acetyl-CoA + H2O = (3S)-3-hydroxy-3-methylglutaryl-CoA + CoA + H(+). It functions in the pathway metabolic intermediate biosynthesis; (R)-mevalonate biosynthesis; (R)-mevalonate from acetyl-CoA: step 2/3. Its activity is regulated as follows. In contrast to bacterial and eukaryotic HMG-CoA synthases, is insensitive to feedback substrate inhibition by acetoacetyl-CoA. Enzymatic activity is inhibited by hymeglusin, which also blocks the propagation of H.volcanii cells in vivo, indicating the critical role that the mevalonate pathway plays in isoprenoid biosynthesis by these archaea. Catalyzes the condensation of acetyl-CoA with acetoacetyl-CoA to form 3-hydroxy-3-methylglutaryl-CoA (HMG-CoA). Functions in the mevalonate (MVA) pathway leading to isopentenyl diphosphate (IPP), a key precursor for the biosynthesis of isoprenoid compounds such as archaeal membrane lipids. The protein is Hydroxymethylglutaryl-CoA synthase (hmgB) of Haloferax volcanii (strain ATCC 29605 / DSM 3757 / JCM 8879 / NBRC 14742 / NCIMB 2012 / VKM B-1768 / DS2) (Halobacterium volcanii).